Reading from the N-terminus, the 145-residue chain is Transcription antitermination protein NusB (145 aa).

It belongs to the NusB family.

In terms of biological role, involved in transcription antitermination. Required for transcription of ribosomal RNA (rRNA) genes. Binds specifically to the boxA antiterminator sequence of the ribosomal RNA (rrn) operons. The chain is Transcription antitermination protein NusB from Acidothermus cellulolyticus (strain ATCC 43068 / DSM 8971 / 11B).